The following is a 1044-amino-acid chain: Diacylglycerol lipase-alpha (1044 aa).

Over 1 to 22 the chain is Cytoplasmic; the sequence is MPGIVVFRRRWSVGSDDLVLPA. The helical transmembrane segment at 23–43 threads the bilayer; that stretch reads IFLFLLHTTWFVILSVVLFGL. Over 44 to 60 the chain is Extracellular; sequence VYNPHEACSLNLVDHGR. The helical transmembrane segment at 61 to 81 threads the bilayer; it reads GYLGILLSCMIAEMAIIWLSM. The Cytoplasmic portion of the chain corresponds to 82–101; that stretch reads RGGILYTEPRDSMQYVLYVR. Residues 102–122 form a helical membrane-spanning segment; it reads LAILVIEFIYAIVGIVWLTQY. Residues 123 to 136 lie on the Extracellular side of the membrane; sequence YTSCNDLTAKNVTL. Residue Asn133 is glycosylated (N-linked (GlcNAc...) asparagine). The helical transmembrane segment at 137 to 157 threads the bilayer; it reads GMVVCNWVVILSVCITVLCVF. The Cytoplasmic segment spans residues 158-1044; that stretch reads DPTGRTFVKL…KQDDLVISAR (887 aa). Residues Ser472 and Asp524 each act as charge relay system in the active site. Phosphoserine is present on residues Ser728, Ser730, Ser733, Ser744, Ser784, Ser786, Ser808, Ser810, Ser835, Ser849, and Ser954. The disordered stretch occupies residues 848–905; the sequence is LSKHSQDTQPLEAALGSGGVTPERPPSAANDEEEAAGGSEGGGVAPRGELALHNGRLG. Residues 1013 to 1044 are disordered; sequence QECLATDKIRTSTPTGHGASPTKQDDLVISAR. Phosphothreonine is present on Thr1025.

This sequence belongs to the AB hydrolase superfamily. Lipase family. Interacts (via C-terminal) with CAMK2A; leading to the phosphorylation and inhibition of DAGLA enzymatic activity. Interacts (via PPXXF motif) with HOMER1 and HOMER2; this interaction is required for DAGLA membrane localization. It depends on Ca(2+) as a cofactor. Post-translationally, phosphorylated at Ser-784 and Ser-810 by CAMK2A; phosphorylation by CAMK2A inhibits diacylglycerol lipase activity.

Its subcellular location is the cell membrane. The protein localises to the cell projection. It is found in the dendritic spine membrane. It localises to the postsynaptic density membrane. The protein resides in the early endosome membrane. The enzyme catalyses a 1,2-diacyl-sn-glycerol + H2O = a 2-acylglycerol + a fatty acid + H(+). It catalyses the reaction 1-octadecanoyl-2-(5Z,8Z,11Z,14Z-eicosatetraenoyl)-sn-glycerol + H2O = 2-(5Z,8Z,11Z,14Z-eicosatetraenoyl)-glycerol + octadecanoate + H(+). It carries out the reaction 1,2-di-(9Z-octadecenoyl)-sn-glycerol + H2O = 2-(9Z-octadecenoyl)-glycerol + (9Z)-octadecenoate + H(+). The catalysed reaction is 1-(9Z-octadecenoyl)-2-(5Z,8Z,11Z,14Z-eicosatetraenoyl)-sn-glycerol + H2O = 2-(5Z,8Z,11Z,14Z-eicosatetraenoyl)-glycerol + (9Z)-octadecenoate + H(+). The enzyme catalyses 1-(9Z-octadecenoyl)-2-octadecanoyl-sn-glycerol + H2O = 2-octadecanoylglycerol + (9Z)-octadecenoate + H(+). It catalyses the reaction 1-(9Z-octadecenoyl)-2-(9Z,12Z-octadecadienoyl)-sn-glycerol + H2O = 2-(9Z,12Z-octadecadienoyl)-glycerol + (9Z)-octadecenoate + H(+). It carries out the reaction 1-(9Z-octadecenoyl)-2-O-(5Z,8Z,11Z,14Z-eicosatetraenyl)-sn-glycerol + H2O = 2-O-(5Z,8Z,11Z,14Z)-eicosatetraenylglycerol + (9Z)-octadecenoate + H(+). Its activity is regulated as follows. Inhibited by 1,2,3-triazole urea covalent inhibitors KT172, DH376 and DO34. Inhibited by p-hydroxy-mercuri-benzoate and HgCl(2), but not to PMSF. Also inhibited by RHC80267. Diacylglycerol lipase activity is inhibited by the phosphorylation of Ser-784 and Ser-810 by CAMK2A. Functionally, serine hydrolase that hydrolyzes arachidonic acid-esterified diacylglycerols (DAGs) to produce the principal endocannabinoid, 2-arachidonoylglycerol (2-AG). Preferentially hydrolyzes sn-1 fatty acids from diacylglycerols (DAG) that contain arachidonic acid (AA) esterified at the sn-2 position to biosynthesize 2-AG. Has negligible activity against other lipids including monoacylglycerols and phospholipids. Plays a key role in regulating 2-AG signaling in the CNS. Controls the activity of 2-AG as a retrograde messenger at neuronal synapses. Supports axonal growth during development and adult neurogenesis. Plays a role for eCB signaling in the physiological regulation of anxiety and depressive behaviors. Also regulates neuroinflammatory responses in the brain, in particular, LPS-induced microglial activation. The sequence is that of Diacylglycerol lipase-alpha (Dagla) from Rattus norvegicus (Rat).